A 572-amino-acid polypeptide reads, in one-letter code: Proline--tRNA ligase (572 aa).

It belongs to the class-II aminoacyl-tRNA synthetase family. ProS type 1 subfamily. In terms of assembly, homodimer.

The protein resides in the cytoplasm. The catalysed reaction is tRNA(Pro) + L-proline + ATP = L-prolyl-tRNA(Pro) + AMP + diphosphate. Functionally, catalyzes the attachment of proline to tRNA(Pro) in a two-step reaction: proline is first activated by ATP to form Pro-AMP and then transferred to the acceptor end of tRNA(Pro). As ProRS can inadvertently accommodate and process non-cognate amino acids such as alanine and cysteine, to avoid such errors it has two additional distinct editing activities against alanine. One activity is designated as 'pretransfer' editing and involves the tRNA(Pro)-independent hydrolysis of activated Ala-AMP. The other activity is designated 'posttransfer' editing and involves deacylation of mischarged Ala-tRNA(Pro). The misacylated Cys-tRNA(Pro) is not edited by ProRS. The chain is Proline--tRNA ligase from Klebsiella pneumoniae (strain 342).